The primary structure comprises 387 residues: Phosphoglycerate kinase (387 aa).

Residues 21–23, arginine 36, 59–62, arginine 113, and arginine 146 contribute to the substrate site; these read DLN and HLGR. Residues lysine 197, glutamate 314, and 340 to 343 contribute to the ATP site; that span reads GGDT.

Belongs to the phosphoglycerate kinase family. As to quaternary structure, monomer.

The protein resides in the cytoplasm. The catalysed reaction is (2R)-3-phosphoglycerate + ATP = (2R)-3-phospho-glyceroyl phosphate + ADP. The protein operates within carbohydrate degradation; glycolysis; pyruvate from D-glyceraldehyde 3-phosphate: step 2/5. The polypeptide is Phosphoglycerate kinase (Yersinia pestis bv. Antiqua (strain Antiqua)).